We begin with the raw amino-acid sequence, 241 residues long: Phosphoribosylaminoimidazole-succinocarboxamide synthase (241 aa).

Belongs to the SAICAR synthetase family.

It catalyses the reaction 5-amino-1-(5-phospho-D-ribosyl)imidazole-4-carboxylate + L-aspartate + ATP = (2S)-2-[5-amino-1-(5-phospho-beta-D-ribosyl)imidazole-4-carboxamido]succinate + ADP + phosphate + 2 H(+). It functions in the pathway purine metabolism; IMP biosynthesis via de novo pathway; 5-amino-1-(5-phospho-D-ribosyl)imidazole-4-carboxamide from 5-amino-1-(5-phospho-D-ribosyl)imidazole-4-carboxylate: step 1/2. The chain is Phosphoribosylaminoimidazole-succinocarboxamide synthase from Lacticaseibacillus paracasei (strain ATCC 334 / BCRC 17002 / CCUG 31169 / CIP 107868 / KCTC 3260 / NRRL B-441) (Lactobacillus paracasei).